Here is a 256-residue protein sequence, read N- to C-terminus: DNA repair protein RecO (256 aa).

The protein belongs to the RecO family.

In terms of biological role, involved in DNA repair and RecF pathway recombination. In Nocardia farcinica (strain IFM 10152), this protein is DNA repair protein RecO.